The primary structure comprises 302 residues: Ribosomal protein L11 methyltransferase (302 aa).

The S-adenosyl-L-methionine site is built by threonine 148, glycine 169, aspartate 191, and asparagine 237.

This sequence belongs to the methyltransferase superfamily. PrmA family.

The protein resides in the cytoplasm. The enzyme catalyses L-lysyl-[protein] + 3 S-adenosyl-L-methionine = N(6),N(6),N(6)-trimethyl-L-lysyl-[protein] + 3 S-adenosyl-L-homocysteine + 3 H(+). Its function is as follows. Methylates ribosomal protein L11. This is Ribosomal protein L11 methyltransferase from Desulfosudis oleivorans (strain DSM 6200 / JCM 39069 / Hxd3) (Desulfococcus oleovorans).